Consider the following 138-residue polypeptide: Small ribosomal subunit protein uS11c (138 aa).

The interval 1–24 (MTKPIPRIGSRKNGRISSRKNGRR) is disordered. Residues 9 to 24 (GSRKNGRISSRKNGRR) show a composition bias toward basic residues.

This sequence belongs to the universal ribosomal protein uS11 family. In terms of assembly, part of the 30S ribosomal subunit.

Its subcellular location is the plastid. The protein resides in the chloroplast. This is Small ribosomal subunit protein uS11c from Chloranthus spicatus (Chulantree).